The sequence spans 355 residues: D-alanine--D-alanine ligase (355 aa).

An ATP-grasp domain is found at 143 to 350 (KTIFSNLKIP…IEQLVAKLVD (208 aa)). 178–233 (LKKLNFPFFVKPSNSGSSLGISKVINESEILQSLEKAQKIDSRILVEEGLEVREIE) contributes to the ATP binding site. 3 residues coordinate Mg(2+): aspartate 303, glutamate 317, and asparagine 319.

Belongs to the D-alanine--D-alanine ligase family. It depends on Mg(2+) as a cofactor. Mn(2+) serves as cofactor.

Its subcellular location is the cytoplasm. The enzyme catalyses 2 D-alanine + ATP = D-alanyl-D-alanine + ADP + phosphate + H(+). It participates in cell wall biogenesis; peptidoglycan biosynthesis. Cell wall formation. In Prochlorococcus marinus (strain MIT 9215), this protein is D-alanine--D-alanine ligase.